A 404-amino-acid polypeptide reads, in one-letter code: MTEVTELMRPEGEALNTKEVLLNLGPQHPSTHGVLRLVLQLDGEYVERIDPHIGYLHRGTEKLAESFTYTQIFPLTDRLDYLCPPSNNLAFALAVEKLLGIEAPIRAQYIRVMMAELARISGHLLITGALPMDLGAMTALLYAMREREMIMDLLEMITGARMHTSYCRVGGVREDLPDGFLPKIREFCEIFPNRIRDYERLIENNRVFLSRTQGIGVISAADAVDLGLSGPNLRASGVDWDIRRDEPYEIYDRLDFDVITREEGDCYARWLCRVDEMRESIRLIEQCMEQMPEGPFQVDIPTIAFPVDKERVHCSMEALIQHFDLSAYGFDVPAGEVYSVIEAPKGELGFYIISDGSPKPFRMKVRAPSFVNLQALFGVTNARYLADMIAVLGSLDPVMAEVDK.

It belongs to the complex I 49 kDa subunit family. As to quaternary structure, NDH-1 is composed of 14 different subunits. Subunits NuoB, C, D, E, F, and G constitute the peripheral sector of the complex.

The protein resides in the cell inner membrane. The catalysed reaction is a quinone + NADH + 5 H(+)(in) = a quinol + NAD(+) + 4 H(+)(out). Functionally, NDH-1 shuttles electrons from NADH, via FMN and iron-sulfur (Fe-S) centers, to quinones in the respiratory chain. The immediate electron acceptor for the enzyme in this species is believed to be ubiquinone. Couples the redox reaction to proton translocation (for every two electrons transferred, four hydrogen ions are translocated across the cytoplasmic membrane), and thus conserves the redox energy in a proton gradient. In Sinorhizobium medicae (strain WSM419) (Ensifer medicae), this protein is NADH-quinone oxidoreductase subunit D 2.